Reading from the N-terminus, the 231-residue chain is MKAITLLSSGLDSVAALAIAAESLEIEMAITFDYGQRAGQREMEYSEKVCEHFGIEQRIIKLDWLGEITHTSLVNRDEEVPSLSFEDIDENSPSMITEYSAKAVWVPNRNGVMLNIAGSFAESRGCDYIVVGFNGEEAGTFPDNSRDYIQAVDNAFSYSTQNGVKVLAPLAEMGKTEIVKKALEAEAPLEYSWSCYHGGEIPCGKCESCVRRARAFKNIGIKDPLLERLGI.

7 to 17 (LSSGLDSVAAL) lines the ATP pocket. The Zn(2+) site is built by C195, C203, C206, and C209.

This sequence belongs to the QueC family. It depends on Zn(2+) as a cofactor.

The enzyme catalyses 7-carboxy-7-deazaguanine + NH4(+) + ATP = 7-cyano-7-deazaguanine + ADP + phosphate + H2O + H(+). It participates in purine metabolism; 7-cyano-7-deazaguanine biosynthesis. Functionally, catalyzes the ATP-dependent conversion of 7-carboxy-7-deazaguanine (CDG) to 7-cyano-7-deazaguanine (preQ(0)). In Methanosarcina mazei (strain ATCC BAA-159 / DSM 3647 / Goe1 / Go1 / JCM 11833 / OCM 88) (Methanosarcina frisia), this protein is 7-cyano-7-deazaguanine synthase.